A 189-amino-acid polypeptide reads, in one-letter code: Accessory gene regulator protein B (189 aa).

5 helical membrane-spanning segments follow: residues Val-50 to Ile-70, Leu-83 to Val-103, Val-105 to Ala-125, Lys-143 to Pro-163, and Tyr-164 to Phe-184.

The protein belongs to the AgrB family.

It localises to the cell membrane. In terms of biological role, essential for the production of a quorum sensing system signal molecule, the autoinducing peptide (AIP). This quorum sensing system is responsible for the regulation of the expression of virulence factor genes. Involved in the proteolytic processing of AgrD, the precursor of AIP. The polypeptide is Accessory gene regulator protein B (Staphylococcus saprophyticus subsp. saprophyticus (strain ATCC 15305 / DSM 20229 / NCIMB 8711 / NCTC 7292 / S-41)).